Reading from the N-terminus, the 196-residue chain is Dephospho-CoA kinase (196 aa).

The region spanning 3 to 196 (RIGLTGNIGC…KVYEELTRDP (194 aa)) is the DPCK domain. 11–16 (GCGKST) is an ATP binding site.

The protein belongs to the CoaE family.

Its subcellular location is the cytoplasm. The catalysed reaction is 3'-dephospho-CoA + ATP = ADP + CoA + H(+). The protein operates within cofactor biosynthesis; coenzyme A biosynthesis; CoA from (R)-pantothenate: step 5/5. Catalyzes the phosphorylation of the 3'-hydroxyl group of dephosphocoenzyme A to form coenzyme A. The chain is Dephospho-CoA kinase from Aquifex aeolicus (strain VF5).